Reading from the N-terminus, the 556-residue chain is HIRA-interacting protein 3 (556 aa).

Phosphoserine is present on S27. The segment covering 64–77 (DEAASREDKLDLTK) has biased composition (basic and acidic residues). The tract at residues 64 to 426 (DEAASREDKL…GRRGEDHPAV (363 aa)) is disordered. T84 is subject to Phosphothreonine. Phosphoserine is present on residues S87, S98, S100, S125, S142, S143, S159, and S160. Residues 99–108 (ESESGSEASS) are compositionally biased toward low complexity. Basic and acidic residues predominate over residues 126-158 (PAKEENPRRASKAVEESSDEERQRDLPAQRGEE). A compositionally biased stretch (basic residues) spans 168–177 (KGKTRKKPVV). S196, S199, S223, and S227 each carry phosphoserine. A compositionally biased stretch (basic and acidic residues) spans 209-224 (KKVEGNKGTKSLKESE). Residues 240 to 254 (EEEVEEEEKEEDEEK) show a composition bias toward acidic residues. Positions 260–269 (RTRSNGRRKS) are enriched in basic residues. 2 positions are modified to phosphoserine: S289 and S291. The segment covering 304–322 (DSGRDREPPVQRKSEDRTQ) has biased composition (basic and acidic residues). Residues S330, S332, S333, and S357 each carry the phosphoserine modification. The residue at position 358 (T358) is a Phosphothreonine. S359, S363, S370, and S372 each carry phosphoserine. Over residues 385–396 (RSSKKSSRKGRT) the composition is skewed to basic residues. Residues 403–527 (SDGSPEAKGG…APPGELYRRT (125 aa)) form an interaction with the histone H2A-H2B complex region. Residue T471 is modified to Phosphothreonine. Residues 502 to 556 (SGRPRRRTAWNPLGEAAPPGELYRRTLDSDEERPRPAPPDWSHMRGIISSDGESN) are disordered. Over residues 523–536 (LYRRTLDSDEERPR) the composition is skewed to basic and acidic residues. 4 positions are modified to phosphoserine: S530, S550, S551, and S555.

In terms of assembly, interacts (via C-terminus) with histone H2A-H2B dimers; the interaction is direct. Interacts with HIRA. Interacts with CK2. Phosphorylated by CK2. Widely expressed. Isoform 1 is predominant in skeletal muscle. Isoform 2 is predominant in liver and heart.

Its subcellular location is the nucleus. Functionally, histone chaperone that carries a H2A-H2B histone complex and facilitates its deposition onto chromatin. The polypeptide is HIRA-interacting protein 3 (HIRIP3) (Homo sapiens (Human)).